Consider the following 80-residue polypeptide: Exodeoxyribonuclease 7 small subunit (80 aa).

The protein belongs to the XseB family. As to quaternary structure, heterooligomer composed of large and small subunits.

It is found in the cytoplasm. The enzyme catalyses Exonucleolytic cleavage in either 5'- to 3'- or 3'- to 5'-direction to yield nucleoside 5'-phosphates.. Bidirectionally degrades single-stranded DNA into large acid-insoluble oligonucleotides, which are then degraded further into small acid-soluble oligonucleotides. The chain is Exodeoxyribonuclease 7 small subunit from Rickettsia typhi (strain ATCC VR-144 / Wilmington).